The chain runs to 119 residues: Large ribosomal subunit protein uL14 (119 aa).

It belongs to the universal ribosomal protein uL14 family. As to quaternary structure, part of the 50S ribosomal subunit. Forms a cluster with proteins L3 and L19. In the 70S ribosome, L14 and L19 interact and together make contacts with the 16S rRNA in bridges B5 and B8.

Its function is as follows. Binds to 23S rRNA. Forms part of two intersubunit bridges in the 70S ribosome. The protein is Large ribosomal subunit protein uL14 of Ehrlichia canis (strain Jake).